Here is a 714-residue protein sequence, read N- to C-terminus: Transcription activator of gluconeogenesis UREG_00958 (714 aa).

The tract at residues 1–71 (MTSNARNGPL…NAKDPLRPRR (71 aa)) is disordered. The segment covering 38–62 (ESQTQVENSSTKQPNGQTKPMSASN) has biased composition (polar residues). Residues 78 to 106 (CFACQRAHLTCGDERPCQRCIKRGIQNSC) constitute a DNA-binding region (zn(2)-C6 fungal-type). Disordered regions lie at residues 176 to 228 (SLSQ…NASG), 274 to 312 (GAGD…TAQP), and 539 to 567 (NTGG…VNPS). Over residues 191-228 (FPSQSPVSPTFSITANSATSGNQNMPSSLPASNGNASG) the composition is skewed to polar residues. Positions 545–555 (GSTSGTSSRGS) are enriched in low complexity.

This sequence belongs to the ERT1/acuK family.

The protein resides in the nucleus. Its function is as follows. Transcription factor which regulates nonfermentable carbon utilization. Activator of gluconeogenetic genes. The polypeptide is Transcription activator of gluconeogenesis UREG_00958 (Uncinocarpus reesii (strain UAMH 1704)).